A 370-amino-acid polypeptide reads, in one-letter code: Integrin-linked kinase-associated serine/threonine phosphatase 2C (370 aa).

An N-acetylmethionine modification is found at methionine 1. The interval 1-69 is disordered; that stretch reads MDLFGDLPEP…SDEEKNGSEE (69 aa). A Phosphoserine modification is found at serine 13. A compositionally biased stretch (low complexity) spans 33 to 45; sequence SSGDSGSLDTSLS. Positions 46 to 69 are enriched in basic and acidic residues; the sequence is EEVKNEGKGAKRKASDEEKNGSEE. Residues 86-368 form the PPM-type phosphatase domain; sequence KGYVAERKGE…DNVTVMVVRI (283 aa). Residues aspartate 130 and glycine 131 each contribute to the Mn(2+) site. Lysine 188 is subject to N6-acetyllysine. The Mn(2+) site is built by aspartate 304 and aspartate 359.

This sequence belongs to the PP2C family. As to quaternary structure, interacts with ILK. It depends on Mg(2+) as a cofactor. Requires Mn(2+) as cofactor.

It is found in the cytoplasm. The enzyme catalyses O-phospho-L-seryl-[protein] + H2O = L-seryl-[protein] + phosphate. It carries out the reaction O-phospho-L-threonyl-[protein] + H2O = L-threonyl-[protein] + phosphate. Functionally, protein phosphatase that may play a role in regulation of cell cycle progression via dephosphorylation of its substrates whose appropriate phosphorylation states might be crucial for cell proliferation. Selectively associates with integrin linked kinase (ILK), to modulate cell adhesion and growth factor signaling. Inhibits the ILK-GSK3B signaling axis and may play an important role in inhibiting oncogenic transformation. This chain is Integrin-linked kinase-associated serine/threonine phosphatase 2C (ILKAP), found in Bos taurus (Bovine).